A 734-amino-acid chain; its full sequence is Elongation factor G, mitochondrial (734 aa).

A mitochondrion-targeting transit peptide spans 1–32; it reads MTSFLTSRFGGLALRNVMNNKNGINSFGLRCF. Residues 38–318 enclose the tr-type G domain; it reads SGLRNIGISA…GVIKYLPSPN (281 aa). Residues 47–54, 114–118, and 168–171 contribute to the GTP site; these read AHIDSGKT, DTPGH, and NKLD.

Belongs to the TRAFAC class translation factor GTPase superfamily. Classic translation factor GTPase family. EF-G/EF-2 subfamily.

It is found in the mitochondrion. The catalysed reaction is GTP + H2O = GDP + phosphate + H(+). Its pathway is protein biosynthesis; polypeptide chain elongation. Its function is as follows. Mitochondrial GTPase that catalyzes the GTP-dependent ribosomal translocation step during translation elongation. During this step, the ribosome changes from the pre-translocational (PRE) to the post-translocational (POST) state as the newly formed A-site-bound peptidyl-tRNA and P-site-bound deacylated tRNA move to the P and E sites, respectively. Catalyzes the coordinated movement of the two tRNA molecules, the mRNA and conformational changes in the ribosome. The sequence is that of Elongation factor G, mitochondrial (gfm1) from Dictyostelium discoideum (Social amoeba).